We begin with the raw amino-acid sequence, 397 residues long: Phosphoglycerate kinase (397 aa).

Substrate is bound by residues 21-23, Arg37, 60-63, Arg119, and Arg152; these read DFN and HLGR. ATP-binding positions include Lys203, Gly294, Glu325, and 354–357; that span reads GGDS.

It belongs to the phosphoglycerate kinase family. As to quaternary structure, monomer.

The protein resides in the cytoplasm. The enzyme catalyses (2R)-3-phosphoglycerate + ATP = (2R)-3-phospho-glyceroyl phosphate + ADP. Its pathway is carbohydrate degradation; glycolysis; pyruvate from D-glyceraldehyde 3-phosphate: step 2/5. In Chlorobium limicola (strain DSM 245 / NBRC 103803 / 6330), this protein is Phosphoglycerate kinase.